A 176-amino-acid polypeptide reads, in one-letter code: Crossover junction endodeoxyribonuclease RuvC (176 aa).

Catalysis depends on residues D9, E69, and D141. Mg(2+) contacts are provided by D9, E69, and D141.

The protein belongs to the RuvC family. In terms of assembly, homodimer which binds Holliday junction (HJ) DNA. The HJ becomes 2-fold symmetrical on binding to RuvC with unstacked arms; it has a different conformation from HJ DNA in complex with RuvA. In the full resolvosome a probable DNA-RuvA(4)-RuvB(12)-RuvC(2) complex forms which resolves the HJ. It depends on Mg(2+) as a cofactor.

It localises to the cytoplasm. It carries out the reaction Endonucleolytic cleavage at a junction such as a reciprocal single-stranded crossover between two homologous DNA duplexes (Holliday junction).. In terms of biological role, the RuvA-RuvB-RuvC complex processes Holliday junction (HJ) DNA during genetic recombination and DNA repair. Endonuclease that resolves HJ intermediates. Cleaves cruciform DNA by making single-stranded nicks across the HJ at symmetrical positions within the homologous arms, yielding a 5'-phosphate and a 3'-hydroxyl group; requires a central core of homology in the junction. The consensus cleavage sequence is 5'-(A/T)TT(C/G)-3'. Cleavage occurs on the 3'-side of the TT dinucleotide at the point of strand exchange. HJ branch migration catalyzed by RuvA-RuvB allows RuvC to scan DNA until it finds its consensus sequence, where it cleaves and resolves the cruciform DNA. This is Crossover junction endodeoxyribonuclease RuvC from Chromobacterium violaceum (strain ATCC 12472 / DSM 30191 / JCM 1249 / CCUG 213 / NBRC 12614 / NCIMB 9131 / NCTC 9757 / MK).